Reading from the N-terminus, the 97-residue chain is Vitelline membrane protein 15a-2 (97 aa).

An N-terminal signal peptide occupies residues 1–19 (MNKIIAALVLFTAVIGALA). Residues 20–23 (DYPA) form a required for binding to the gut receptor region. The tract at residues 26–46 (PPPPKPYHAPPPPPYHAPPHH) is disordered. The VM domain occupies 61-97 (KAPAAKCGANLLVGCAPSVAHVPCVPVHPHPPPPAHY).

It belongs to the vitelline membrane protein family. In terms of tissue distribution, expressed in the anterior region of the follicle cells.

The protein resides in the secreted. Its function is as follows. Has an oostatic activity. Inhibits trypsin biosynthesis in the midgut epithelial cells which indirectly reduces the vitellogenin concentration in the hemolymph resulting in inhibition of oocyte development. The chain is Vitelline membrane protein 15a-2 (15a-2) from Aedes aegypti (Yellowfever mosquito).